The chain runs to 975 residues: E3 ubiquitin-protein ligase BRE1A (975 aa).

The interval 1 to 30 (MSGIGNKRAAGEPGTSMPPEKKAAVEDSGT) is disordered. K21 is subject to N6-acetyllysine. At S41 the chain carries Phosphoserine. A coiled-coil region spans residues 43–90 (TEELDIRTLQTKNRKLAEMLDQRQAIEDELREHIEKLERRQATDDASL). Residues 125-155 (KALVVPEPEPDSDSNQERKDDRERGEGQEPA) are disordered. Phosphoserine occurs at positions 136 and 138. A compositionally biased stretch (basic and acidic residues) spans 139-151 (NQERKDDRERGEG). 2 coiled-coil regions span residues 168 to 375 (EEME…EQVV) and 429 to 898 (SLHK…TTKK). Residues K348 and K510 each carry the N6-acetyllysine modification. A disordered region spans residues 507–622 (DLNKTRLRSG…GKHDDGRKKE (116 aa)). S522 bears the Phosphoserine mark. Over residues 527-540 (EDPKDEPAELKPDS) the composition is skewed to basic and acidic residues. The segment covering 543–552 (LSSQSSASKA) has biased composition (low complexity). The segment covering 558–622 (NEIKSKRDEE…GKHDDGRKKE (65 aa)) has biased composition (basic and acidic residues). Residue S562 is modified to Phosphoserine. The RING-type zinc-finger motif lies at 922–961 (CPCCNMRKKDAVLTKCFHVFCFECVKTRYDTRQRKCPKCN).

This sequence belongs to the BRE1 family. Component of the RNF20/40 complex (also known as BRE1 complex) probably composed of 2 copies of RNF20/BRE1A and 2 copies of RNF40/BRE1B. Interacts with UBE2E1/UBCH6. Interacts with p53/TP53 and WAC. Interacts with PAF1; the interaction mediates the association of the PAF1 and RNF20/40 complexes which is a prerequsite for recruitment of UBE2A/B. Interacts with isoform 1 and isoform 2 of PA2G4. Interacts with FBXL19. In terms of assembly, (Microbial infection) Interacts with human herpesvirus 8 (KSHV) protein RTA/ORF50; this interaction targets the SMC5-SMC6 complex for proteasomal degradation. As to expression, expressed in the normal brain and also in malignant gliomas (at protein level).

Its subcellular location is the nucleus. It catalyses the reaction S-ubiquitinyl-[E2 ubiquitin-conjugating enzyme]-L-cysteine + [acceptor protein]-L-lysine = [E2 ubiquitin-conjugating enzyme]-L-cysteine + N(6)-ubiquitinyl-[acceptor protein]-L-lysine.. The protein operates within protein modification; protein ubiquitination. Component of the RNF20/40 E3 ubiquitin-protein ligase complex that mediates monoubiquitination of 'Lys-120' of histone H2B (H2BK120ub1). H2BK120ub1 gives a specific tag for epigenetic transcriptional activation and is also prerequisite for histone H3 'Lys-4' and 'Lys-79' methylation (H3K4me and H3K79me, respectively). It thereby plays a central role inb histone code and gene regulation. The RNF20/40 complex forms a H2B ubiquitin ligase complex in cooperation with the E2 enzyme UBE2A or UBE2B; reports about the cooperation with UBE2E1/UBCH are contradictory. Required for transcriptional activation of Hox genes. Recruited to the MDM2 promoter, probably by being recruited by p53/TP53, and thereby acts as a transcriptional coactivator. Mediates the polyubiquitination of isoform 2 of PA2G4 in cancer cells leading to its proteasome-mediated degradation. Functionally, (Microbial infection) Promotes the human herpesvirus 8 (KSHV) lytic cycle by inducing the expression of lytic viral genes including the latency switch gene RTA/ORF50. This chain is E3 ubiquitin-protein ligase BRE1A (RNF20), found in Homo sapiens (Human).